The sequence spans 206 residues: ATP phosphoribosyltransferase (206 aa).

This sequence belongs to the ATP phosphoribosyltransferase family. Short subfamily. Heteromultimer composed of HisG and HisZ subunits.

It localises to the cytoplasm. It carries out the reaction 1-(5-phospho-beta-D-ribosyl)-ATP + diphosphate = 5-phospho-alpha-D-ribose 1-diphosphate + ATP. It participates in amino-acid biosynthesis; L-histidine biosynthesis; L-histidine from 5-phospho-alpha-D-ribose 1-diphosphate: step 1/9. Catalyzes the condensation of ATP and 5-phosphoribose 1-diphosphate to form N'-(5'-phosphoribosyl)-ATP (PR-ATP). Has a crucial role in the pathway because the rate of histidine biosynthesis seems to be controlled primarily by regulation of HisG enzymatic activity. This is ATP phosphoribosyltransferase from Brachyspira hyodysenteriae (strain ATCC 49526 / WA1).